The sequence spans 54 residues: Ovomucoid (54 aa).

Positions 4–54 (VDCSDYPRPVCTLDYMPLCGSDNKTYSNKCNFCNAVVDSNGTITLSHFGRC) constitute a Kazal-like domain. 3 cysteine pairs are disulfide-bonded: cysteine 6–cysteine 36, cysteine 14–cysteine 33, and cysteine 22–cysteine 54. Asparagine 43 is a glycosylation site (N-linked (GlcNAc...) asparagine).

It is found in the secreted. This is Ovomucoid from Corvus albus (Pied crow).